The sequence spans 394 residues: Tubulin-like protein CetZ5 (394 aa).

Residues 10–14 (QAGGN), 110–112 (GTG), glutamate 142, asparagine 169, and asparagine 187 contribute to the GTP site.

It belongs to the CetZ family.

The protein localises to the cytoplasm. Functionally, involved in cell shape control. In Haloferax volcanii (strain ATCC 29605 / DSM 3757 / JCM 8879 / NBRC 14742 / NCIMB 2012 / VKM B-1768 / DS2) (Halobacterium volcanii), this protein is Tubulin-like protein CetZ5.